Reading from the N-terminus, the 295-residue chain is Nucleotide-binding protein CMS1991 (295 aa).

ATP is bound at residue 19-26; the sequence is GMSGAGRS. Residue 70-73 coordinates GTP; sequence DVRG.

The protein belongs to the RapZ-like family.

Its function is as follows. Displays ATPase and GTPase activities. This is Nucleotide-binding protein CMS1991 from Clavibacter sepedonicus (Clavibacter michiganensis subsp. sepedonicus).